We begin with the raw amino-acid sequence, 248 residues long: Probable transcriptional regulatory protein Desal_2886 (248 aa).

The segment at 1 to 21 (MAGHSKWANIQHRKGRQDAKR) is disordered.

Belongs to the TACO1 family.

It is found in the cytoplasm. The sequence is that of Probable transcriptional regulatory protein Desal_2886 from Maridesulfovibrio salexigens (strain ATCC 14822 / DSM 2638 / NCIMB 8403 / VKM B-1763) (Desulfovibrio salexigens).